A 513-amino-acid chain; its full sequence is Na(+)/H(+) antiporter NhaB (513 aa).

11 consecutive transmembrane segments (helical) span residues Leu23–Ala43, Ile52–Ile72, Leu97–Phe117, Phe144–Ile164, Leu202–Pro222, Phe238–Leu258, Ala303–Ile323, Thr348–Ile368, Leu391–Ile411, Ala447–Ile467, and Val475–Phe495.

The protein belongs to the NhaB Na(+)/H(+) (TC 2.A.34) antiporter family.

It localises to the cell inner membrane. It carries out the reaction 2 Na(+)(in) + 3 H(+)(out) = 2 Na(+)(out) + 3 H(+)(in). Its function is as follows. Na(+)/H(+) antiporter that extrudes sodium in exchange for external protons. The sequence is that of Na(+)/H(+) antiporter NhaB from Escherichia coli (strain SMS-3-5 / SECEC).